Here is a 164-residue protein sequence, read N- to C-terminus: Protein SprT (164 aa).

In terms of domain architecture, SprT-like spans Q14 to V156. Residue H69 coordinates Zn(2+). The active site involves E70. H73 serves as a coordination point for Zn(2+).

This sequence belongs to the SprT family. It depends on Zn(2+) as a cofactor.

It is found in the cytoplasm. The chain is Protein SprT from Pseudomonas entomophila (strain L48).